The primary structure comprises 277 residues: Elongation factor 1-delta (277 aa).

A2 is subject to N-acetylalanine. K17 is modified (N6-acetyllysine). Residues S37, S44, S60, S86, and S106 each carry the phosphoserine modification. At K107 the chain carries N6-acetyllysine. The segment at 113–171 (SALEKSSPAHRATTPQTQHVSPMRQVEPPSRKAATATEDDEDDDIDLFGSDEEEDKEAA) is disordered. Position 117 is an N6-acetyllysine; alternate (K117). The residue at position 117 (K117) is an N6-succinyllysine; alternate. S119 carries the phosphoserine modification. Position 129 is a phosphothreonine (T129). Position 133 is a phosphoserine (S133). T147 is modified (phosphothreonine). Acidic residues predominate over residues 149–168 (TEDDEDDDIDLFGSDEEEDK). At S162 the chain carries Phosphoserine; by CK2.

Belongs to the EF-1-beta/EF-1-delta family. As to quaternary structure, EF-1 is composed of 4 subunits: alpha, beta, delta, and gamma.

Functionally, EF-1-beta and EF-1-delta stimulate the exchange of GDP bound to EF-1-alpha to GTP. The chain is Elongation factor 1-delta (EEF1D) from Ovis aries (Sheep).